The sequence spans 84 residues: Large ribosomal subunit protein bL27 (84 aa).

This sequence belongs to the bacterial ribosomal protein bL27 family.

The sequence is that of Large ribosomal subunit protein bL27 from Buchnera aphidicola subsp. Acyrthosiphon pisum (strain Tuc7).